The following is a 286-amino-acid chain: uncharacterized protein (286 aa).

NAD(+) is bound by residues 4–18 (AVIG…IARN) and Thr95. Lys171 is a catalytic residue. Position 239 (Lys239) interacts with NAD(+).

This sequence belongs to the HIBADH-related family.

This is an uncharacterized protein from Bacillus subtilis (strain 168).